We begin with the raw amino-acid sequence, 559 residues long: Cocaine esterase (559 aa).

A signal peptide spans 1-26; that stretch reads MRLHRLRARLSAVACGLLLLLVRGQG. The residue at position 27 (Q27) is a Pyrrolidone carboxylic acid. C95 and C123 are joined by a disulfide. The N-linked (GlcNAc...) asparagine glycan is linked to N111. S228 (acyl-ester intermediate) is an active-site residue. N276 carries an N-linked (GlcNAc...) asparagine glycan. C280 and C291 are disulfide-bonded. Residues E345 and H457 each act as charge relay system in the active site. The Prevents secretion from ER motif lies at 556–559; that stretch reads HTEL.

Belongs to the type-B carboxylesterase/lipase family. As to quaternary structure, monomer. Post-translationally, glycosylated. As to expression, preferentially expressed in intestine with moderate expression in liver. Within the intestine, highest expression is found in small intestine with lower expression in colon and rectum.

It is found in the endoplasmic reticulum lumen. The enzyme catalyses cocaine + H2O = ecgonine methyl ester + benzoate + H(+). It catalyses the reaction a carboxylic ester + H2O = an alcohol + a carboxylate + H(+). It carries out the reaction 4-methylumbelliferyl acetate + H2O = 4-methylumbelliferone + acetate + H(+). The catalysed reaction is 2-(5Z,8Z,11Z,14Z-eicosatetraenoyl)-glycerol + H2O = glycerol + (5Z,8Z,11Z,14Z)-eicosatetraenoate + H(+). The enzyme catalyses prostaglandin E2 1-glyceryl ester + H2O = prostaglandin E2 + glycerol + H(+). It catalyses the reaction prostaglandin F2alpha 1-glyceryl ester + H2O = prostaglandin F2alpha + glycerol + H(+). Functionally, involved in the detoxification of xenobiotics and in the activation of ester and amide prodrugs. Shows high catalytic efficiency for hydrolysis of cocaine, 4-methylumbelliferyl acetate, heroin and 6-monoacetylmorphine. Hydrolyzes aspirin, substrates with large alcohol group and small acyl group and endogenous lipids such as triacylglycerol. Converts monoacylglycerides to free fatty acids and glycerol. Hydrolyzes of 2-arachidonoylglycerol and prostaglandins. The protein is Cocaine esterase of Homo sapiens (Human).